We begin with the raw amino-acid sequence, 309 residues long: Voltage-dependent anion channel-forming protein mll4386 (309 aa).

The next 3 helical transmembrane spans lie at 32 to 52 (ILPQ…LARW), 58 to 78 (GVFN…YLSF), and 227 to 247 (IVCL…TPLF).

Belongs to the anion channel-forming bestrophin (TC 1.A.46) family.

It is found in the cell membrane. The sequence is that of Voltage-dependent anion channel-forming protein mll4386 from Mesorhizobium japonicum (strain LMG 29417 / CECT 9101 / MAFF 303099) (Mesorhizobium loti (strain MAFF 303099)).